Reading from the N-terminus, the 202-residue chain is Peptidyl-tRNA hydrolase (202 aa).

Tyr19 contributes to the tRNA binding site. The Proton acceptor role is filled by His24. TRNA is bound by residues Tyr70, Asn72, and Asn118.

Belongs to the PTH family. As to quaternary structure, monomer.

The protein resides in the cytoplasm. It carries out the reaction an N-acyl-L-alpha-aminoacyl-tRNA + H2O = an N-acyl-L-amino acid + a tRNA + H(+). In terms of biological role, hydrolyzes ribosome-free peptidyl-tRNAs (with 1 or more amino acids incorporated), which drop off the ribosome during protein synthesis, or as a result of ribosome stalling. Its function is as follows. Catalyzes the release of premature peptidyl moieties from peptidyl-tRNA molecules trapped in stalled 50S ribosomal subunits, and thus maintains levels of free tRNAs and 50S ribosomes. This is Peptidyl-tRNA hydrolase from Prochlorococcus marinus (strain NATL1A).